A 719-amino-acid polypeptide reads, in one-letter code: NF-kappa-B inhibitor zeta (719 aa).

Positions 46 to 81 are enriched in low complexity; the sequence is GACDGGCSASGPSAPGSPGSDSSDFSSASSVSSCGA. Residues 46–97 form a disordered region; sequence GACDGGCSASGPSAPGSPGSDSSDFSSASSVSSCGAVESRPRGGARAERLQV. Residues 84–97 show a composition bias toward basic and acidic residues; sequence SRPRGGARAERLQV. The region spanning 108–130 is the OCA domain; the sequence is RGPFQGVRVKNSVKELLLHIRSH. A Nuclear localization signal motif is present at residues 164–179; the sequence is KRKGSDSLSDGPACKR. Disordered regions lie at residues 188 to 210 and 289 to 343; these read LTPP…ESKQ and YSPQ…FAPL. Over residues 201-210 the composition is skewed to basic and acidic residues; sequence EDVHHNESKQ. The tract at residues 322-394 is required for transcriptional activity; sequence SYEPHLFGRE…LARPDASSTP (73 aa). The interval 405-719 is interaction with NFKB1/p50; it reads GGNPMSTTQL…KSIQQRAPPY (315 aa). 7 ANK repeats span residues 444–473, 480–509, 513–542, 552–581, 583–608, 613–642, and 649–682; these read DGDT…ALHM, NGQS…QVNT, WGRT…GSNQ, DGLT…HSPE, QELL…AVEA, SGRT…CLSF, and NGNT…DPST.

In terms of assembly, interacts with NFKB1/p50. Interacts with RELA. Interacts with AKIRIN2.

It is found in the nucleus. Functionally, involved in regulation of NF-kappa-B transcription factor complexes. Inhibits NF-kappa-B activity without affecting its nuclear translocation upon stimulation. Inhibits DNA-binding of RELA and NFKB1/p50, and of the NF-kappa-B p65-p50 heterodimer and the NF-kappa-B p50-p50 homodimer. Also seems to activate NF-kappa-B-mediated transcription. In vitro, upon association with NFKB1/p50 has transcriptional activation activity and, together with NFKB1/p50 and RELA, is recruited to LCN2 promoters. Promotes transcription of LCN2 and DEFB4. Is recruited to IL-6 promoters and activates IL-6 but decreases TNF-alpha production in response to LPS. Seems to be involved in the induction of inflammatory genes activated through TLR/IL-1 receptor signaling. Involved in the induction of T helper 17 cells (Th17) differentiation upon recognition of antigen by T cell antigen receptor (TCR). The protein is NF-kappa-B inhibitor zeta (NFKBIZ) of Bos taurus (Bovine).